The primary structure comprises 547 residues: Chaperonin GroEL (547 aa).

ATP is bound by residues threonine 30–proline 33, lysine 51, aspartate 87–threonine 91, glycine 415, asparagine 479–alanine 481, and aspartate 495.

The protein belongs to the chaperonin (HSP60) family. Forms a cylinder of 14 subunits composed of two heptameric rings stacked back-to-back. Interacts with the co-chaperonin GroES.

The protein localises to the cytoplasm. It carries out the reaction ATP + H2O + a folded polypeptide = ADP + phosphate + an unfolded polypeptide.. Its function is as follows. Together with its co-chaperonin GroES, plays an essential role in assisting protein folding. The GroEL-GroES system forms a nano-cage that allows encapsulation of the non-native substrate proteins and provides a physical environment optimized to promote and accelerate protein folding. The polypeptide is Chaperonin GroEL (Delftia acidovorans (strain DSM 14801 / SPH-1)).